Reading from the N-terminus, the 150-residue chain is SsrA-binding protein (150 aa).

Belongs to the SmpB family.

Its subcellular location is the cytoplasm. Required for rescue of stalled ribosomes mediated by trans-translation. Binds to transfer-messenger RNA (tmRNA), required for stable association of tmRNA with ribosomes. tmRNA and SmpB together mimic tRNA shape, replacing the anticodon stem-loop with SmpB. tmRNA is encoded by the ssrA gene; the 2 termini fold to resemble tRNA(Ala) and it encodes a 'tag peptide', a short internal open reading frame. During trans-translation Ala-aminoacylated tmRNA acts like a tRNA, entering the A-site of stalled ribosomes, displacing the stalled mRNA. The ribosome then switches to translate the ORF on the tmRNA; the nascent peptide is terminated with the 'tag peptide' encoded by the tmRNA and targeted for degradation. The ribosome is freed to recommence translation, which seems to be the essential function of trans-translation. In Campylobacter jejuni (strain RM1221), this protein is SsrA-binding protein.